A 303-amino-acid polypeptide reads, in one-letter code: MKQYGKVAVLMGGSSSEREVSLMSGAGVLSALRSKGVDAHGFDPSEKPLSALKEEGFDCVFNILHGPFGEDGTLQGALEALGMPYTGCGVMASAIAMDKWRTKLLWKGAGLPIPAFELLDENSDFDAIERQLGLPIFVKPSTEGSSIGVTKVKQPGELRAAFEEARKYDKVVIAEQFIGGGEYTCAVIGETAYPTIKIEPATEYYDYQAKYFRDDTVYRCPSGLAPEVEARARELALKAFKVLGCRGWSRVDFLMDEAGEIYLLEANTSPGMTSHSLVPMAARAEGIAYEDLCLKVLDTVHVG.

One can recognise an ATP-grasp domain in the interval 103–298 (KLLWKGAGLP…YEDLCLKVLD (196 aa)). ATP is bound at residue 129-184 (ERQLGLPIFVKPSTEGSSIGVTKVKQPGELRAAFEEARKYDKVVIAEQFIGGGEYT). The Mg(2+) site is built by Asp252, Glu265, and Asn267.

This sequence belongs to the D-alanine--D-alanine ligase family. It depends on Mg(2+) as a cofactor. Mn(2+) is required as a cofactor.

The protein resides in the cytoplasm. It catalyses the reaction 2 D-alanine + ATP = D-alanyl-D-alanine + ADP + phosphate + H(+). Its pathway is cell wall biogenesis; peptidoglycan biosynthesis. Its function is as follows. Cell wall formation. The sequence is that of D-alanine--D-alanine ligase B from Chromobacterium violaceum (strain ATCC 12472 / DSM 30191 / JCM 1249 / CCUG 213 / NBRC 12614 / NCIMB 9131 / NCTC 9757 / MK).